We begin with the raw amino-acid sequence, 909 residues long: MDTAEEDICRVCRSEGTPEKPLYHPCVCTGSIKFIHQECLVQWLKHSRKEYCELCKHRFAFTPIYSPDMPSRLPIQDIFAGLVTSIGTAIRYWFHYTLVAFAWLGVVPLTACRIYKCLFTGSVSSLLTLPLDMLSTENLLADCLQGCFVVTCTLCAFISLVWLREQIVHGGAPIWLEHAAPPFNAAGHHQNEAPVGGNGAENPAADQPANPAGENAVLGENPDAQDGQAEEEEEDNEEEDDAGVEDAADANNGAQDDMNWNALEWDRAAEELTWERMLGLDGSLVFLEHVFWVVSLNTLFILVFAFCPYHIGHFSLVGLGFEEHVQASHFEGLITTIVGYILLAITLIICHALATLVKFHRSRRLLGVCYIVVKVSLLVVVEIGVFPLICGWWLDICSLEMFDATLKDRELSFQSAPGTTMFLHWLVGMVYVFYFASFILLLREVLRPGVLWFLRNLNDPDFNPVQEMIHLPIYRHLRRFILSVIVFGSIVLLMLWLPIRIIKSLLPNFLPYNVMLYSDAPVSELSLELLLLQVVLPALLEQGHTRQWLKGLVRAWTVTAGYLLDLHSYLLGDQEENENSANQQVNNNQPARNNNAVPAGEGLHAAHQAILQQGGPVGFQPYRRPLNFPLRIFLLIVFMCITLLIASLICLTLPVFAGRWLMSFWTGTAKIHELYTAACGLYVCWLTIRAVTVLVAWMPQGRRVIFQKVKEWSLMIMKTLIVAVLLAGVVPLLLGLLFELVIVAPLRVPLDQTPLFYPWQDWALGVLHAKIIAAITLMGPQWWLKTVIEQVYANGIRNIDLHYIIRKLAAPVISVLLLSLCVPYVIASGAVPLLGVTAEMQNLVHRRIYPFLLMVVVLMGILSFQVRQFKRLYEHIKNDKYLVGQRLVNYERKSGKQGPSTPPPVSSQE.

M1 bears the N-acetylmethionine mark. An RING-CH-type zinc finger spans residues 1–62 (MDTAEEDICR…ELCKHRFAFT (62 aa)). Residues 1 to 91 (MDTAEEDICR…LVTSIGTAIR (91 aa)) are Cytoplasmic-facing. Positions 9, 12, 26, 28, 36, 39, 52, and 55 each coordinate Zn(2+). A helical transmembrane segment spans residues 92–112 (YWFHYTLVAFAWLGVVPLTAC). At 113-142 (RIYKCLFTGSVSSLLTLPLDMLSTENLLAD) the chain is on the extracellular side. Residues 143–163 (CLQGCFVVTCTLCAFISLVWL) form a helical membrane-spanning segment. Over 164–283 (REQIVHGGAP…WERMLGLDGS (120 aa)) the chain is Cytoplasmic. The tract at residues 186–256 (AGHHQNEAPV…AADANNGAQD (71 aa)) is disordered. Residues 228–248 (QAEEEEEDNEEEDDAGVEDAA) show a composition bias toward acidic residues. Residues 284-304 (LVFLEHVFWVVSLNTLFILVF) form a helical membrane-spanning segment. Over 305-336 (AFCPYHIGHFSLVGLGFEEHVQASHFEGLITT) the chain is Extracellular. Residues 337–357 (IVGYILLAITLIICHALATLV) form a helical membrane-spanning segment. The Cytoplasmic portion of the chain corresponds to 358-376 (KFHRSRRLLGVCYIVVKVS). The helical transmembrane segment at 377–397 (LLVVVEIGVFPLICGWWLDIC) threads the bilayer. Over 398–421 (SLEMFDATLKDRELSFQSAPGTTM) the chain is Extracellular. A helical membrane pass occupies residues 422–442 (FLHWLVGMVYVFYFASFILLL). Topologically, residues 443–480 (REVLRPGVLWFLRNLNDPDFNPVQEMIHLPIYRHLRRF) are cytoplasmic. A helical transmembrane segment spans residues 481 to 501 (ILSVIVFGSIVLLMLWLPIRI). Over 502–519 (IKSLLPNFLPYNVMLYSD) the chain is Extracellular. Residues 520 to 540 (APVSELSLELLLLQVVLPALL) traverse the membrane as a helical segment. At 541–631 (EQGHTRQWLK…YRRPLNFPLR (91 aa)) the chain is on the cytoplasmic side. The helical transmembrane segment at 632 to 652 (IFLLIVFMCITLLIASLICLT) threads the bilayer. Residues 653–677 (LPVFAGRWLMSFWTGTAKIHELYTA) lie on the Extracellular side of the membrane. Residues 678–698 (ACGLYVCWLTIRAVTVLVAWM) form a helical membrane-spanning segment. Over 699–720 (PQGRRVIFQKVKEWSLMIMKTL) the chain is Cytoplasmic. A helical transmembrane segment spans residues 721–741 (IVAVLLAGVVPLLLGLLFELV). At 742–763 (IVAPLRVPLDQTPLFYPWQDWA) the chain is on the extracellular side. The chain crosses the membrane as a helical span at residues 764–784 (LGVLHAKIIAAITLMGPQWWL). The Cytoplasmic portion of the chain corresponds to 785–814 (KTVIEQVYANGIRNIDLHYIIRKLAAPVIS). A helical transmembrane segment spans residues 815–835 (VLLLSLCVPYVIASGAVPLLG). Residues 836-847 (VTAEMQNLVHRR) lie on the Extracellular side of the membrane. A helical transmembrane segment spans residues 848-868 (IYPFLLMVVVLMGILSFQVRQ). Over 869–909 (FKRLYEHIKNDKYLVGQRLVNYERKSGKQGPSTPPPVSSQE) the chain is Cytoplasmic.

This sequence belongs to the DOA10/MARCHF6 family. In terms of assembly, interacts with DIO2. Interacts with SQLE. Auto-ubiquitinated, which results in proteasomal degradation. Deubiquitinated by USP19; protecting MARCHF6 from p97-mediated proteasomal degradation.

It localises to the endoplasmic reticulum membrane. It carries out the reaction S-ubiquitinyl-[E2 ubiquitin-conjugating enzyme]-L-cysteine + [acceptor protein]-L-lysine = [E2 ubiquitin-conjugating enzyme]-L-cysteine + N(6)-ubiquitinyl-[acceptor protein]-L-lysine.. It functions in the pathway protein modification; protein ubiquitination. Functionally, endoplasmic reticulum membrane-associated E3 ubiquitin ligase that plays a critical role in mitigating endoplasmic reticulum stress, the regulation of cholesterol and lipid homeostasis, and ferroptosis. Acts as a pivotal component of both the Ac/N-degron pathway (targeting the N-terminal acetyl group of substrates) and the ER-associated protein degradation-cytosol (ERAD-C) pathway (targeting misfolded substrates). For instance, mediates the degradation of Ac/N-degron-bearing proteins such as the G-protein regulator RGS2 and the lipid droplet protein PLIN2. Suppresses endoplasmic reticulum stress and ferroptosis through cytosolic POMC degradation. Prevents ferroptosis by acting as a NADPH sensor during lipid peroxidation through its C-terminal regulatory region. Facilitates also the degradation of selected endoplasmic reticulum proteins by associating with signal peptide peptidase for the turnover of endogenous tail-anchored proteins. Promotes ubiquitination of DIO2, leading to its degradation. By ubiquitinating and thereby modulating the stability of many proteins of the cholesterol pathway including SQLE, CYP51A1, CYP11A1 and HMGCR, acts as a crucial post-translational regulator of cholesterol synthesis. This chain is E3 ubiquitin-protein ligase MARCHF6 (Marchf6), found in Mus musculus (Mouse).